The following is a 101-amino-acid chain: Ubiquitin-related modifier 1 homolog (101 aa).

Glycine 101 is subject to 1-thioglycine. Glycine 101 is covalently cross-linked (Glycyl lysine isopeptide (Gly-Lys) (interchain with K-? in acceptor proteins)).

It belongs to the URM1 family. As to quaternary structure, interacts with cer. In terms of processing, C-terminal thiocarboxylation occurs in 2 steps, it is first acyl-adenylated (-COAMP) via the hesA/moeB/thiF part of the MOCS3 homolog, then thiocarboxylated (-COSH) via the rhodanese domain of the MOCS3 homolog.

The protein localises to the cytoplasm. It participates in tRNA modification; 5-methoxycarbonylmethyl-2-thiouridine-tRNA biosynthesis. Functionally, acts as a sulfur carrier required for 2-thiolation of mcm(5)S(2)U at tRNA wobble positions of cytosolic tRNA(Lys), tRNA(Glu) and tRNA(Gln). Serves as sulfur donor in tRNA 2-thiolation reaction by being thiocarboxylated (-COSH) at its C-terminus by MOCS3. The sulfur is then transferred to tRNA to form 2-thiolation of mcm(5)S(2)U. Also acts as a ubiquitin-like protein (UBL) that is covalently conjugated via an isopeptide bond to lysine residues of target proteins such as Prx2/Jafrac1, Ciao1, Eip71CD and GILT1. The thiocarboxylated form serves as substrate for conjugation and oxidative stress specifically induces the formation of UBL-protein conjugates. In Drosophila erecta (Fruit fly), this protein is Ubiquitin-related modifier 1 homolog.